The sequence spans 135 residues: Ribonuclease VapC26 (135 aa).

One can recognise a PINc domain in the interval 1–118 (MIIDTSALLA…TRTILTLDRR (118 aa)). Mg(2+) contacts are provided by Asp-4 and Asp-97.

Belongs to the PINc/VapC protein family. Mg(2+) serves as cofactor.

Toxic component of a type II toxin-antitoxin (TA) system. An RNase. Upon expression in M.smegmatis inhibits colony formation. Its toxic effect is neutralized by coexpression with cognate antitoxin VapB26. The chain is Ribonuclease VapC26 from Mycobacterium tuberculosis (strain ATCC 25618 / H37Rv).